A 230-amino-acid polypeptide reads, in one-letter code: Uracil-DNA glycosylase (230 aa).

D71 acts as the Proton acceptor in catalysis.

This sequence belongs to the uracil-DNA glycosylase (UDG) superfamily. UNG family.

The protein resides in the cytoplasm. It catalyses the reaction Hydrolyzes single-stranded DNA or mismatched double-stranded DNA and polynucleotides, releasing free uracil.. Functionally, excises uracil residues from the DNA which can arise as a result of misincorporation of dUMP residues by DNA polymerase or due to deamination of cytosine. The polypeptide is Uracil-DNA glycosylase (Tropheryma whipplei (strain TW08/27) (Whipple's bacillus)).